A 594-amino-acid chain; its full sequence is Type IV inositol polyphosphate 5-phosphatase 7 (594 aa).

Residues 246 to 300 (FRCGHRPSDYSRRPSDYSRPSDYYSRPSNYSRPSDVSRWGSSDDDNGPGDSPSTF) are disordered. Positions 251 to 261 (RPSDYSRRPSD) are enriched in basic and acidic residues. A compositionally biased stretch (low complexity) spans 262 to 279 (YSRPSDYYSRPSNYSRPS). Catalytic stretches follow at residues 435 to 450 (DRVI…IALS) and 515 to 530 (KRRT…WHGE).

It belongs to the inositol polyphosphate 5-phosphatase family. In terms of tissue distribution, broadly expressed in emerging organs. Mostly localized in procambium of growing organs. Restricted to vascular differentiating cells of young organs.

The protein localises to the nucleus. It is found in the cell membrane. It carries out the reaction a 1,2-diacyl-sn-glycero-3-phospho-(1D-myo-inositol-4,5-bisphosphate) + H2O = a 1,2-diacyl-sn-glycero-3-phospho-(1D-myo-inositol 4-phosphate) + phosphate. The catalysed reaction is a 1,2-diacyl-sn-glycero-3-phospho-(1D-myo-inositol-3,4,5-trisphosphate) + H2O = a 1,2-diacyl-sn-glycero-3-phospho-(1D-myo-inositol-3,4-bisphosphate) + phosphate. Its function is as follows. Has phosphatase activity toward PtdIns(4,5)P2 and at a lower extent toward PtdIns(3,4,5)P3 but not toward Ins(1,4,5)P3. Acts redundantly with CVP2 for maintaining vascular continuity. Regulates phosphoinositide-dependent VAN3 localization. Functions in salt stress response by regulating reactive oxygen species (ROS) production and stress-responsive genes expression. In Arabidopsis thaliana (Mouse-ear cress), this protein is Type IV inositol polyphosphate 5-phosphatase 7.